A 350-amino-acid polypeptide reads, in one-letter code: Probable poly-beta-1,6-N-acetyl-D-glucosamine export protein (350 aa).

Helical transmembrane passes span 8–28 (LVYL…LTQI), 40–60 (LVLQ…FIIL), 83–103 (YILI…SLLT), 119–139 (QWYG…YIIF), 146–166 (FNSK…LYYF), 182–202 (LSEN…AYMG), 216–236 (LVIM…LANG), 254–274 (IMFI…FNTI), 276–296 (MISA…DSLF), and 308–328 (VFLA…GMIL).

It belongs to the acyltransferase 3 family.

The protein resides in the cell membrane. In terms of biological role, presumably involved in the export of the biofilm adhesin polysaccharide poly-beta-1,6-N-acetyl-D-glucosamine (PNAG, also referred to as PIA) across the cell membrane. This Staphylococcus aureus (strain NCTC 8325 / PS 47) protein is Probable poly-beta-1,6-N-acetyl-D-glucosamine export protein (icaC).